A 3942-amino-acid chain; its full sequence is Protein bassoon (3942 aa).

The interval 1 to 158 is disordered; sequence MGNEASLEGG…PTSPYSVPQI (158 aa). A lipid anchor (N-myristoyl glycine) is attached at Gly2. The segment covering 9–29 has biased composition (gly residues); sequence GGAGEGPLPPGGSGLGPGPGA. Over residues 31 to 52 the composition is skewed to low complexity; that stretch reads KPPSALAGGGQLPVAGAARAAG. Residues 53-71 show a composition bias toward pro residues; that stretch reads PPTPGLGPVPGPGPGPGPG. The interval 62–71 is 5 X 2 AA tandem repeats of P-G; the sequence is PGPGPGPGPG. 2 stretches are compositionally biased toward polar residues: residues 85 to 98 and 127 to 154; these read SQRTTSPTPKQASA and QVDSRTQRSGRSPSVSPDRGSTPTSPYS. Residue Ser142 is modified to Phosphoserine. At Arg145 the chain carries Omega-N-methylarginine. C4-type zinc fingers lie at residues 167–190 and 195–217; these read CPICKTSDLTSTPSQPNFNTCTQC and CNQCGFNPNPHLTQVKEWLCLNC. Disordered stretches follow at residues 228–341 and 362–457; these read TTAP…EQTQ and LMSV…KTMP. A compositionally biased stretch (polar residues) spans 230 to 240; that stretch reads APRSKSQQQLH. Residues Ser241 and Ser245 each carry the phosphoserine modification. Positions 362–379 are enriched in polar residues; sequence LMSVQPEADTQGQPSPSK. Residues 395–407 show a composition bias toward pro residues; that stretch reads PRPPGSGPGPGPT. C4-type zinc fingers lie at residues 464–487 and 492–514; these read CPLCQAELNMGSRGPANYNTCTAC and CNLCGFNPTPHLVEKTEWLCLNC. 4 disordered regions span residues 525–937, 950–1258, 1309–1553, and 1573–1625; these read GEPA…LQGG, GSYG…VAES, MDPM…WQQS, and RMVH…PSAG. A compositionally biased stretch (pro residues) spans 528 to 541; the sequence is APLPLPTPQQPPAG. Repeat copies occupy residues 570-576, 577-583, 584-590, 591-597, and 598-604. A 5 X 7 AA tandem repeats of K-A-S-P-Q-[AT]-[AT] region spans residues 570–604; that stretch reads KASPQATKASPQATKASPQATKASPQTTKASPQAK. A compositionally biased stretch (polar residues) spans 573 to 600; sequence PQATKASPQATKASPQATKASPQTTKAS. The segment covering 632-645 has biased composition (pro residues); sequence VPKPPPETTVPPGT. Positions 684 to 693 are enriched in polar residues; sequence QDLSRSPQSL. Residues 694 to 708 show a composition bias toward low complexity; sequence SDTGYSSDGVSSSQS. Over residues 709–718 the composition is skewed to polar residues; that stretch reads EITGVVQQEV. Composition is skewed to acidic residues over residues 787 to 802 and 865 to 876; these read FDSDEELGDILEEDDS and SAEEDNLEEDDT. At Arg881 the chain carries Omega-N-methylarginine. The span at 895–905 shows a compositional bias: basic and acidic residues; sequence PRPESSQEPKR. Residue Ser980 is modified to Phosphoserine. Residues 994 to 1011 are compositionally biased toward low complexity; sequence PASTPSYTSGTSPTSLSS. Residues 1049-1062 are compositionally biased toward acidic residues; sequence DSSEEEELREEEEL. Phosphoserine is present on residues Ser1050 and Ser1051. Over residues 1063–1076 the composition is skewed to basic and acidic residues; that stretch reads LREQEKMREVEQQR. The residue at position 1100 (Ser1100) is a Phosphoserine. Residue Thr1102 is modified to Phosphothreonine. Phosphoserine occurs at positions 1108 and 1114. Residues 1117 to 1132 are compositionally biased toward basic and acidic residues; sequence EELRQAAEMEELHRSS. Composition is skewed to low complexity over residues 1133 to 1143 and 1173 to 1190; these read CSEYSPSPSLD and SPTETPSGSSTTPSSGRP. Over residues 1192–1207 the composition is skewed to basic and acidic residues; sequence KSAEEAYEDMMRKAEM. Positions 1209-1219 are enriched in low complexity; that stretch reads QRQQGQVAGAR. A compositionally biased stretch (polar residues) spans 1226-1240; it reads SQPTGPRSQGSFEYQ. Ser1236 carries the phosphoserine modification. A compositionally biased stretch (low complexity) spans 1333–1343; it reads SFSTSTSSDSS. The O-linked (GlcNAc) threonine glycan is linked to Thr1354. The span at 1357–1366 shows a compositional bias: basic and acidic residues; the sequence is FAKEPQDPLK. Polar residues predominate over residues 1370–1438; it reads SPVSSTLTSK…TTANYGSQTE (69 aa). The O-linked (GlcNAc) threonine glycan is linked to Thr1395. A phosphoserine mark is found at Ser1482, Ser1491, and Ser1493. Positions 1488 to 1498 are enriched in low complexity; sequence STPSESPTFSP. Polar residues-rich tracts occupy residues 1508-1522 and 1573-1609; these read EFSTQTPSLTLSSDI and RMVHASASTSPLCSPTDSQPTSHSYSQTTPPSASQMP. Ser1707 carries an O-linked (GlcNAc) serine glycan. An omega-N-methylarginine mark is found at Arg1792 and Arg1796. Residue Arg1806 is modified to Asymmetric dimethylarginine; alternate. Omega-N-methylarginine; alternate is present on Arg1806. The residue at position 1818 (Arg1818) is an Omega-N-methylarginine. Disordered regions lie at residues 1831–1865 and 1926–1977; these read GVGLKPGPVPEPGAEPHRATPAELRSHAPPGTRKP and PSAP…QRPY. The span at 1844–1856 shows a compositional bias: basic and acidic residues; it reads AEPHRATPAELRS. The O-linked (GlcNAc) threonine glycan is linked to Thr1934. Ser1990 and Ser2046 each carry phosphoserine. 2 positions are modified to omega-N-methylarginine: Arg2051 and Arg2081. Asymmetric dimethylarginine occurs at positions 2255, 2265, and 2270. A glycan (O-linked (GlcNAc) threonine) is linked at Thr2318. Disordered regions lie at residues 2327-2378, 2476-2504, and 2524-2663; these read PVAP…KQQE, EQKQRQKAPFPATCEAPSRGPPPAATELA, and TEGP…STTA. Residues 2329 to 2342 are compositionally biased toward pro residues; the sequence is APAPGPAPAPPPGQ. The span at 2361-2378 shows a compositional bias: basic and acidic residues; it reads ASEKEEASQEDRQRKQQE. 2 coiled-coil regions span residues 2366–2422 and 2453–2483; these read EASQ…LVQR and LAQQRLQLEQIQQLQQQLQLQLEEQKQRQKA. O-linked (GlcNAc) threonine glycosylation occurs at Thr2524. Polar residues predominate over residues 2541–2551; sequence SSASDMSLQTE. Ser2578 carries the phosphoserine modification. 2 positions are modified to phosphothreonine: Thr2595 and Thr2622. The span at 2643-2655 shows a compositional bias: basic and acidic residues; that stretch reads RHSDSGSDSKHDA. An O-linked (GlcNAc) threonine glycan is attached at Thr2700. An interaction with DAO region spans residues 2730–3278; the sequence is EPDGQAQGVA…GGVSGRPGKD (549 aa). Phosphoserine occurs at positions 2811, 2860, and 2866. Residues 2854 to 2874 are disordered; the sequence is TLQRSLSDPKPLSPTAEESAK. A glycan (O-linked (GlcNAc) threonine) is linked at Thr2945. Ser3022 bears the Phosphoserine mark. Disordered stretches follow at residues 3051–3409, 3431–3560, and 3581–3917; these read PATP…LTSR, YYGV…PRAH, and EAYH…KILP. Positions 3073-3083 are enriched in polar residues; it reads TAGSSGPTQNG. Low complexity predominate over residues 3089–3114; it reads APTYTGPSTYPAPTYPPGTGYPAEPG. Over residues 3202 to 3211 the composition is skewed to basic and acidic residues; that stretch reads KAPEHPRGSD. The span at 3212–3237 shows a compositional bias: polar residues; sequence RSSVSQSPAPTYPSDSHYTSLEQNVP. The residue at position 3301 (Ser3301) is a Phosphoserine. Composition is skewed to basic and acidic residues over residues 3330–3342 and 3372–3391; these read GDSDYRHGARADK and QGMEQKISKFSPIEEAKDVE. Ser3382 carries the post-translational modification Phosphoserine. Over residues 3447–3461 the composition is skewed to low complexity; sequence YGSSSRSRMASAYSG. Residues 3464-3487 are compositionally biased toward basic and acidic residues; sequence LSSHDYSSRGKGYERERDTAERLQ. Arg3502 carries the omega-N-methylarginine modification. Positions 3520-3534 are enriched in low complexity; it reads PLGRPRPAGGALPPG. Composition is skewed to basic and acidic residues over residues 3549–3560 and 3592–3602; these read VQEHVKDGPRAH and WFDKPRDARSD. Over residues 3652–3665 the composition is skewed to basic residues; it reads EHRHHSDHGRHSGR. The segment covering 3666 to 3690 has biased composition (basic and acidic residues); the sequence is HAGEEPGRRAAKPHARDMGRHEARP. The span at 3750 to 3820 shows a compositional bias: low complexity; that stretch reads TQAQPQMQGR…QARLQPQSQP (71 aa). An Omega-N-methylarginine modification is found at Arg3823. The segment covering 3835–3851 has biased composition (pro residues); the sequence is KPQPGPTTAPGPQPAGP. The segment covering 3856 to 3891 has biased composition (low complexity); the sequence is QASSSKPPAAKAPQQGRAPQAQTTPGPGPAGAKPGA.

As to quaternary structure, interacts with PCLO, ERC2/CAST1, RIMS1 and UNC13A. Interacts with TPRG1L. Interacts with DYNLL1 and DYNLL2; these interactions potentially link PTVs to dynein and myosin V motor complexes. Interacts with ATG5; this interaction is important for the regulation of presynaptic autophagy. Interacts (via C-terminus) with TRIO (via N-terminus). Interacts with CTBP1. Interacts with SIAH1; this interaction negatively regulates SIAH1 E3 ligase activity. Interacts (via coiled region) with DAO; the interaction is direct. Myristoylated. The N-terminal myristoylation is not sufficient for presynaptic localization. Expressed in brain and retina.

The protein resides in the cytoplasm. Its subcellular location is the presynaptic active zone. It is found in the cytoskeleton. It localises to the cytoplasmic vesicle. The protein localises to the secretory vesicle. The protein resides in the synaptic vesicle membrane. Scaffold protein of the presynaptic cytomatrix at the active zone (CAZ) which is the place in the synapse where neurotransmitter is released. After synthesis, participates in the formation of Golgi-derived membranous organelles termed Piccolo-Bassoon transport vesicles (PTVs) that are transported along axons to sites of nascent synaptic contacts. At the presynaptic active zone, regulates the spatial organization of synaptic vesicle cluster, the protein complexes that execute membrane fusion and compensatory endocytosis. Also functions in processes other than assembly such as the regulation of specific presynaptic protein ubiquitination by interacting with SIAH1 or the regulation of presynaptic autophagy by associating with ATG5. Also mediates synapse to nucleus communication leading to reconfiguration of gene expression by associating with the transcriptional corepressor CTBP1 and by subsequently reducing the size of its pool available for nuclear import. Inhibits the activity of the proportion of DAO enzyme that localizes to the presynaptic active zone, which may modulate synaptic transmission. The protein is Protein bassoon of Mus musculus (Mouse).